A 130-amino-acid polypeptide reads, in one-letter code: MAQVEYRGTGRRKNSVARVRLVPGEGNITVNNRDVREYLPFESLILDLNQPFDVTETKGNYDVLVNVHGGGFTGQAQAIRHGIARALLEADPEYRGSLKRAGLLTRDPRMKERKKPGLKAARRSPQFSKR.

The interval 99–130 (KRAGLLTRDPRMKERKKPGLKAARRSPQFSKR) is disordered. Residues 111–130 (KERKKPGLKAARRSPQFSKR) show a composition bias toward basic residues.

It belongs to the universal ribosomal protein uS9 family.

The sequence is that of Small ribosomal subunit protein uS9 from Staphylococcus aureus (strain Mu3 / ATCC 700698).